The following is a 25-amino-acid chain: LASP1 neighbor protein (25 aa).

The helical transmembrane segment at 4 to 24 (IFILMFFAIIGLVILSYIIYL) threads the bilayer.

The protein localises to the membrane. Functionally, may play a key role in the skin fibroblasts (FBs)-keratinocyte-like cells (KLCs). In Homo sapiens (Human), this protein is LASP1 neighbor protein.